Consider the following 288-residue polypeptide: Ribosomal protein L11 methyltransferase (288 aa).

Residues threonine 134, glycine 157, aspartate 179, and asparagine 224 each contribute to the S-adenosyl-L-methionine site.

The protein belongs to the methyltransferase superfamily. PrmA family.

The protein resides in the cytoplasm. It catalyses the reaction L-lysyl-[protein] + 3 S-adenosyl-L-methionine = N(6),N(6),N(6)-trimethyl-L-lysyl-[protein] + 3 S-adenosyl-L-homocysteine + 3 H(+). Methylates ribosomal protein L11. The chain is Ribosomal protein L11 methyltransferase from Caulobacter sp. (strain K31).